Consider the following 103-residue polypeptide: Large ribosomal subunit protein bL21 (103 aa).

Belongs to the bacterial ribosomal protein bL21 family. In terms of assembly, part of the 50S ribosomal subunit. Contacts protein L20.

This protein binds to 23S rRNA in the presence of protein L20. The sequence is that of Large ribosomal subunit protein bL21 from Rhodococcus jostii (strain RHA1).